The chain runs to 415 residues: Esterase FrsA (415 aa).

The protein belongs to the FrsA family. As to quaternary structure, monomer in solution. Homodimer. Forms a 1:1 complex with the unphosphorylated form of the EIIA component of the glucose-specific PTS system (IIAGlc).

It carries out the reaction a carboxylic ester + H2O = an alcohol + a carboxylate + H(+). Functionally, catalyzes the hydrolysis of esters. In vitro, prefers short chain alkanoate ester as substrate. Displays highest activity towards p-nitrophenyl acetate (pNPA). Has weaker activity towards p-nitrophenyl butyrate (pNPB). The chain is Esterase FrsA from Vibrio vulnificus (strain CMCP6).